The chain runs to 249 residues: Homeobox protein TGIF2LX (249 aa).

A compositionally biased stretch (basic and acidic residues) spans 1–27 (MEAAADRPAETRSRVEKDSRRAKKDSP). 2 disordered regions span residues 1–60 (MEAA…KKKR) and 121–215 (QRRG…EPVS). Residues 28–46 (AKTQSPAQDTSIMLRSNAD) are compositionally biased toward polar residues. Residues 55-118 (EHKKKRKGYL…INARRRILPD (64 aa)) constitute a DNA-binding region (homeobox; TALE-type). The segment covering 159–172 (DNVQSLPLRSSPKG) has biased composition (polar residues). Over residues 202–215 (VSNITSSSSPEPVS) the composition is skewed to low complexity.

Belongs to the TALE/TGIF homeobox family.

Its subcellular location is the nucleus. Its function is as follows. May have a transcription role in testis. The protein is Homeobox protein TGIF2LX (TGIF2LX) of Miopithecus talapoin (Angolan talapoin).